Consider the following 840-residue polypeptide: Leucine--tRNA ligase (840 aa).

Residues 44–55 (PYPSANGLHVGH) carry the 'HIGH' region motif. A 'KMSKS' region motif is present at residues 617–621 (KMSKS). Position 620 (Lys620) interacts with ATP.

This sequence belongs to the class-I aminoacyl-tRNA synthetase family.

The protein localises to the cytoplasm. The catalysed reaction is tRNA(Leu) + L-leucine + ATP = L-leucyl-tRNA(Leu) + AMP + diphosphate. This chain is Leucine--tRNA ligase, found in Borreliella burgdorferi (strain ZS7) (Borrelia burgdorferi).